The following is a 187-amino-acid chain: Transmembrane protein 17A (187 aa).

4 helical membrane-spanning segments follow: residues 49–69 (IFLYFNAFYFPFWWVCYVIML), 82–102 (FILVVLLILMSVIEVIRLYLG), 114–134 (LAGFCLLSILLQLPLLLFLLC), and 146–166 (AVHGILTAFLLIQIPISIFAL).

The protein belongs to the TMEM17 family. As to quaternary structure, part of the tectonic-like complex (also named B9 complex).

Its subcellular location is the cell projection. The protein resides in the cilium membrane. Transmembrane component of the tectonic-like complex, a complex localized at the transition zone of primary cilia and acting as a barrier that prevents diffusion of transmembrane proteins between the cilia and plasma membranes. Required for ciliogenesis and sonic hedgehog/SHH signaling. The chain is Transmembrane protein 17A (tmem17-a) from Xenopus tropicalis (Western clawed frog).